A 328-amino-acid polypeptide reads, in one-letter code: Probable magnesium transporter NIPA6 (328 aa).

The Extracellular segment spans residues methionine 1–aspartate 4. Residues asparagine 5–leucine 25 form a helical membrane-spanning segment. At lysine 26–proline 51 the chain is on the cytoplasmic side. The helical transmembrane segment at leucine 52–isoleucine 72 threads the bilayer. Over tyrosine 73–alanine 76 the chain is Extracellular. The helical transmembrane segment at valine 77–leucine 97 threads the bilayer. Topologically, residues leucine 98–lysine 104 are cytoplasmic. A helical membrane pass occupies residues methionine 105–proline 125. At lysine 126–glutamine 142 the chain is on the extracellular side. A helical membrane pass occupies residues proline 143–phenylalanine 163. Over glutamate 164–tyrosine 175 the chain is Cytoplasmic. Residues isoleucine 176 to alanine 196 form a helical membrane-spanning segment. At isoleucine 197 to tyrosine 209 the chain is on the extracellular side. Residues proline 210–leucine 230 form a helical membrane-spanning segment. Residues asparagine 231–alanine 240 lie on the Cytoplasmic side of the membrane. The chain crosses the membrane as a helical span at residues isoleucine 241–methionine 261. At phenylalanine 262–aspartate 269 the chain is on the extracellular side. The helical transmembrane segment at alanine 270 to leucine 290 threads the bilayer. The Cytoplasmic segment spans residues histidine 291–tyrosine 328.

It belongs to the NIPA (TC 2.A.7) family. In terms of assembly, homodimer.

It is found in the cell membrane. The protein localises to the early endosome. Its function is as follows. Acts as a Mg(2+) transporter. Can also transport other divalent cations such as Fe(2+), Sr(2+), Ba(2+), Mn(2+) and Co(2+) but to a much less extent than Mg(2+). The polypeptide is Probable magnesium transporter NIPA6 (Arabidopsis thaliana (Mouse-ear cress)).